The following is a 235-amino-acid chain: Ribitol-5-phosphate cytidylyltransferase (235 aa).

CTP is bound by residues 7-10 (LAGG), 82-88 (GADRNTS), and S113.

The protein belongs to the IspD/TarI cytidylyltransferase family. TarI subfamily.

The enzyme catalyses D-ribitol 5-phosphate + CTP + H(+) = CDP-L-ribitol + diphosphate. It functions in the pathway cell wall biogenesis; poly(ribitol phosphate) teichoic acid biosynthesis. Catalyzes the transfer of the cytidylyl group of CTP to D-ribitol 5-phosphate. This Streptococcus pneumoniae (strain Hungary19A-6) protein is Ribitol-5-phosphate cytidylyltransferase.